Reading from the N-terminus, the 266-residue chain is Tryptophan synthase alpha chain (266 aa).

Residues E47 and D58 each act as proton acceptor in the active site.

This sequence belongs to the TrpA family. Tetramer of two alpha and two beta chains.

It carries out the reaction (1S,2R)-1-C-(indol-3-yl)glycerol 3-phosphate + L-serine = D-glyceraldehyde 3-phosphate + L-tryptophan + H2O. Its pathway is amino-acid biosynthesis; L-tryptophan biosynthesis; L-tryptophan from chorismate: step 5/5. Its function is as follows. The alpha subunit is responsible for the aldol cleavage of indoleglycerol phosphate to indole and glyceraldehyde 3-phosphate. The chain is Tryptophan synthase alpha chain from Leptospira biflexa serovar Patoc (strain Patoc 1 / Ames).